We begin with the raw amino-acid sequence, 872 residues long: MGKKIKKEVEPPPKDVFDPLMIESKKAATVVLMLNSPEEEILAKACEAIYKFALKGEENKTTLLELGAVEPLTKLLTHEDKIVRRNATMIFGILASNNDVKKLLRELDVMNSVIAQLAPEEEVVIHEFASLCLANMSAEYTSKVQIFEHGGLEPLIRLLSSPDPDVKKNSMECIYNLVQDFQCRAKLQELNAIPPILDLLKSEYPVIQLLALKTLGVIANDKESRTMLRDNQGLDHLIKILETKELNDLHIEALAVIANCLEDMDTMVQIQQTGGLKKLLSFAENSTIPDIQKNAAKAITKAAYDPENRKLFHEQEVEKCLVALLGSENDGTKIAASQAISAMCENSGSKDFFNNQGIPQLIQLLKSDNEEVREAAALALANLTTCNPANANAAAEADGIDPLINLLSSKRDGAIANAATVLTNMAMQEPLRLNIQNHDIMHAIISPLRSANTVVQSKAALAVTATACDVEARTELRNSGGLEPLVELLRSKNDEVRKHASWAVMVCAGDELTANELCRLGALDILEEVNVSGTRKNKFSEAAYNKLLNNNLSLKYSQTGYLSSSNIINDGFYDYGRINPGTKLLPLKELCLQEPSDLRAVLLINSKSYVSPPSSMEDKSDVGYGRSISSSSSLRRSSKEKNKKNSYHFSAGFGSPIEDKSEPASGRNTVLSKSATKEKGWRKSKGKKEEEKVKEEEEVMVVPKFVGEGSSDKEWCPPSDPDFSMYVYEVTKSILPITNIKEQIEDLAKYVAEKMGGKIPKEKLPDFSWELHISELKFQLKSNVIPIGHVKKGIFYHRALLFKALADRIGIGCSLVRGEYGRAWNEVMLQNDSRKGVIGGLPAPEMYVIDLMFHPGGLMKLRSREADLYRFI.

ARM repeat units lie at residues 15–54 (DVFDPLMIESKKAATVVLMLNSPEEEILAKACEAIYKFAL), 57–96 (EENKTTLLELGAVEPLTKLLTHEDKIVRRNATMIFGILAS), 98–138 (NDVK…NMSA), 140–179 (YTSKVQIFEHGGLEPLIRLLSSPDPDVKKNSMECIYNLVQ), 181–220 (FQCRAKLQELNAIPPILDLLKSEYPVIQLLALKTLGVIAN), 222–262 (KESR…NCLE), 264–304 (MDTM…KAAY), 306–345 (PENRKLFHEQEVEKCLVALLGSENDGTKIAASQAISAMCE), 346–385 (NSGSKDFFNNQGIPQLIQLLKSDNEEVREAAALALANLTT), 388–427 (PANANAAAEADGIDPLINLLSSKRDGAIANAATVLTNMAM), 429–468 (EPLRLNIQNHDIMHAIISPLRSANTVVQSKAALAVTATAC), and 470–509 (VEARTELRNSGGLEPLVELLRSKNDEVRKHASWAVMVCAG). Residues C507 and C518 are each lipidated (S-palmitoyl cysteine). Residues 610–693 (VSPPSSMEDK…SKGKKEEEKV (84 aa)) form a disordered region. A compositionally biased stretch (low complexity) spans 626 to 635 (RSISSSSSLR). Positions 636 to 646 (RSSKEKNKKNS) are enriched in basic residues. The segment covering 675–693 (ATKEKGWRKSKGKKEEEKV) has biased composition (basic and acidic residues).

In terms of assembly, homodimer. Interacts with PIK3C3, PIK3R4 and BECN1. Interacts (via ARM domains) with ATG14. Palmitoylation is important for its function in autophagy. Expressed in skeletal muscle, brain, lung, kidney, prostate and testis. In terms of tissue distribution, mainly expressed in skeletal muscle, liver, spleen and thymus. As to expression, expressed only in the testis among normal tissues but is expressed frequently in various cancer tissues and, particularly, in pancreatic, lung and endometrial cancers.

In terms of biological role, essential for male fertility and sperm motility. During spermatogenesis, promotes the autophagic degradation of excessive ribosomes, providing energy resources for mitochondria and thus ensuring sperm flagellar motility. The sequence is that of Armadillo repeat-containing protein 3 (ARMC3) from Homo sapiens (Human).